Consider the following 286-residue polypeptide: Phosphonates import ATP-binding protein PhnC (286 aa).

Residues 3–246 (FHLKQVTRRF…AVTEIYGTDS (244 aa)) form the ABC transporter domain. 35–42 (GRSGAGKS) contacts ATP.

This sequence belongs to the ABC transporter superfamily. Phosphonates importer (TC 3.A.1.9.1) family. As to quaternary structure, the complex is composed of two ATP-binding proteins (PhnC), two transmembrane proteins (PhnE) and a solute-binding protein (PhnD).

Its subcellular location is the cell inner membrane. The enzyme catalyses phosphonate(out) + ATP + H2O = phosphonate(in) + ADP + phosphate + H(+). Part of the ABC transporter complex PhnCDE involved in phosphonates import. Responsible for energy coupling to the transport system. The protein is Phosphonates import ATP-binding protein PhnC of Agrobacterium fabrum (strain C58 / ATCC 33970) (Agrobacterium tumefaciens (strain C58)).